The following is a 334-amino-acid chain: Biotin synthase (334 aa).

The Radical SAM core domain occupies 48–275 (NQVQTSQLLS…RSMVRLSAGR (228 aa)). 3 residues coordinate [4Fe-4S] cluster: Cys63, Cys67, and Cys70. [2Fe-2S] cluster contacts are provided by Cys107, Cys138, Cys198, and Arg270.

Belongs to the radical SAM superfamily. Biotin synthase family. Homodimer. It depends on [4Fe-4S] cluster as a cofactor. Requires [2Fe-2S] cluster as cofactor.

The enzyme catalyses (4R,5S)-dethiobiotin + (sulfur carrier)-SH + 2 reduced [2Fe-2S]-[ferredoxin] + 2 S-adenosyl-L-methionine = (sulfur carrier)-H + biotin + 2 5'-deoxyadenosine + 2 L-methionine + 2 oxidized [2Fe-2S]-[ferredoxin]. It participates in cofactor biosynthesis; biotin biosynthesis; biotin from 7,8-diaminononanoate: step 2/2. Functionally, catalyzes the conversion of dethiobiotin (DTB) to biotin by the insertion of a sulfur atom into dethiobiotin via a radical-based mechanism. The chain is Biotin synthase from Maricaulis maris (strain MCS10) (Caulobacter maris).